Consider the following 465-residue polypeptide: VGFKAGVKDYKLTYYTPEYETKDTDILAAFRVTPQPGVPAEEAGAAVAAESSTGTWTTVWTDGLTSLDRYKGRCYHIEPVAGEEDQFIAYVAYPLDLFEEGSVTNMFTSIVGNVFGFKALRALRLEDLRIPPSYIKTFQGPPHGIQVERDKLNKYGRPLLGCTIKPKLGLSAKNYGRAVYECLRGGLDFTKDDENVNSQPFMRWRDRFLFCAEAIYKAQAETGEIKGHYLNATAGTCEEMIKRAVFARELGVPIVMHDYLTGGFTANTSLAHYCRDNGLLLHIHRAMHAVIDRQKNHGMHFRVLAKALRLSGGDHIHAGTVVGKLEGEREITLGFVDLLRDDFVEKDRSRGIYFTQDWVSTPGVLPVASGGIHVWHMPALTEIFGDDSVLQFGGGTLGHPWGNAPGAVANRVALEACVRARNEGRDLAREGNEIIREASKWSLELAAACEVWKEIKFNWQAVDTI.

The residue at position 4 (Lys-4) is an N6,N6,N6-trimethyllysine. Residues Asn-113 and Thr-163 each coordinate substrate. Lys-165 (proton acceptor) is an active-site residue. Lys-167 is a substrate binding site. Mg(2+) is bound by residues Lys-191, Asp-193, and Glu-194. Lys-191 is modified (N6-carboxylysine). The active-site Proton acceptor is His-284. Substrate-binding residues include Arg-285, His-317, and Ser-369.

Belongs to the RuBisCO large chain family. Type I subfamily. In terms of assembly, heterohexadecamer of 8 large chains and 8 small chains; disulfide-linked. The disulfide link is formed within the large subunit homodimers. Mg(2+) serves as cofactor. The disulfide bond which can form in the large chain dimeric partners within the hexadecamer appears to be associated with oxidative stress and protein turnover.

Its subcellular location is the plastid. It is found in the chloroplast. The catalysed reaction is 2 (2R)-3-phosphoglycerate + 2 H(+) = D-ribulose 1,5-bisphosphate + CO2 + H2O. The enzyme catalyses D-ribulose 1,5-bisphosphate + O2 = 2-phosphoglycolate + (2R)-3-phosphoglycerate + 2 H(+). Its function is as follows. RuBisCO catalyzes two reactions: the carboxylation of D-ribulose 1,5-bisphosphate, the primary event in carbon dioxide fixation, as well as the oxidative fragmentation of the pentose substrate in the photorespiration process. Both reactions occur simultaneously and in competition at the same active site. This Securidaca diversifolia (Easter flower) protein is Ribulose bisphosphate carboxylase large chain.